A 270-amino-acid chain; its full sequence is Chlorophyll a-b binding protein 7, chloroplastic (270 aa).

The N-terminal 42 residues, 1–42, are a transit peptide targeting the chloroplast; it reads MASACASSTIAAVAFSSPSSRRNGSIVGTTKASFLGGRRLRV. Tryptophan 68 lines the chlorophyll b pocket. 3 residues coordinate chlorophyll a: phenylalanine 88, glutamate 107, and histidine 110. Arginine 112 contributes to the chlorophyll b binding site. Residues 113–133 traverse the membrane as a helical segment; that stretch reads WAMLGAAGIFIPELLTKIGIL. Position 144 (glutamine 144) interacts with chlorophyll a. The helical transmembrane segment at 146-166 threads the bilayer; sequence YFTDTTTLFIVELVLIGWAEG. Isoleucine 155, glutamate 165, and arginine 168 together coordinate chlorophyll b. Chlorophyll a-binding residues include lysine 221, glutamate 222, asparagine 225, arginine 227, glutamine 239, and histidine 254. The helical transmembrane segment at 228–248 threads the bilayer; the sequence is LAMLAVMGAWFQHIYTGTGPI.

This sequence belongs to the light-harvesting chlorophyll a/b-binding (LHC) protein family. As to quaternary structure, the LHC complex consists of chlorophyll a-b binding proteins. Binds at least 14 chlorophylls (8 Chl-a and 6 Chl-b) and carotenoids such as lutein and neoxanthin. is required as a cofactor. Post-translationally, photoregulated by reversible phosphorylation of its threonine residues.

The protein resides in the plastid. The protein localises to the chloroplast thylakoid membrane. In terms of biological role, the light-harvesting complex (LHC) functions as a light receptor, it captures and delivers excitation energy to photosystems with which it is closely associated. The polypeptide is Chlorophyll a-b binding protein 7, chloroplastic (CAB7) (Solanum lycopersicum (Tomato)).